The primary structure comprises 380 residues: Cytochrome b (380 aa).

Helical transmembrane passes span 33–53 (FGSL…FLAM), 77–98 (WMIR…FLHI), 113–133 (WNIG…GYVL), and 178–198 (FFTL…LHLL). Positions 83 and 97 each coordinate heme b. Heme b contacts are provided by histidine 182 and histidine 196. Histidine 201 is an a ubiquinone binding site. 4 helical membrane passes run 226–246 (IKDI…TLLS), 288–308 (LGGV…PALH), 320–340 (LSQF…WIGG), and 347–367 (FITI…LLMP).

The protein belongs to the cytochrome b family. In terms of assembly, the cytochrome bc1 complex contains 11 subunits: 3 respiratory subunits (MT-CYB, CYC1 and UQCRFS1), 2 core proteins (UQCRC1 and UQCRC2) and 6 low-molecular weight proteins (UQCRH/QCR6, UQCRB/QCR7, UQCRQ/QCR8, UQCR10/QCR9, UQCR11/QCR10 and a cleavage product of UQCRFS1). This cytochrome bc1 complex then forms a dimer. Heme b is required as a cofactor.

Its subcellular location is the mitochondrion inner membrane. In terms of biological role, component of the ubiquinol-cytochrome c reductase complex (complex III or cytochrome b-c1 complex) that is part of the mitochondrial respiratory chain. The b-c1 complex mediates electron transfer from ubiquinol to cytochrome c. Contributes to the generation of a proton gradient across the mitochondrial membrane that is then used for ATP synthesis. This is Cytochrome b (MT-CYB) from Pongo abelii (Sumatran orangutan).